The following is a 434-amino-acid chain: MRKSKVLTLGFQHVLAMYAGAVIVPLIVGSSLKLNAEQLAYLVSIDLLTCGIATLLQVWRNKFFGIGLPVMLGCTFTAVGPMIAIGSEYGMPAIYGSVLASGLFLALFAGFFGKLARFFPPIVTGSVVTIIGITLIPVAVQDMGGGQGSADFGSLSNLALSFGVLLFIILANRFFTGFIRAISILLGLIFGTIAGAFMGKVDIGPLLDASWFHGIHPFYFGFPTFHLPSILTMTLVAIVSVMESTGVFVALGKITEKELTADDLKRGYRSEGLASILGSIMNSFPYTTYSQNVGLIQISKVKSRDVVITAGFILVILGFMPKIAALTLLIPTAVLGGAMIAMFGMVVSSGIKMLGAIDLNNHENLLIIACSVSVGLGVTVAPNLFDHLPDSIKILTSNGIVAGSLTAILMNFLFTVGRKKQDESHASAENVHAA.

The next 12 helical transmembrane spans lie at 9–29 (LGFQHVLAMYAGAVIVPLIVG), 39–59 (LAYLVSIDLLTCGIATLLQVW), 63–83 (FFGIGLPVMLGCTFTAVGPMI), 93–113 (AIYGSVLASGLFLALFAGFFG), 118–138 (FFPPIVTGSVVTIIGITLIPV), 159–179 (ALSFGVLLFIILANRFFTGFI), 181–201 (AISILLGLIFGTIAGAFMGKV), 218–238 (FYFGFPTFHLPSILTMTLVAI), 306–326 (VVITAGFILVILGFMPKIAAL), 327–347 (TLLIPTAVLGGAMIAMFGMVV), 365–385 (LLIIACSVSVGLGVTVAPNLF), and 394–414 (ILTSNGIVAGSLTAILMNFLF).

Belongs to the nucleobase:cation symporter-2 (NCS2) (TC 2.A.40) family.

The protein resides in the cell membrane. With respect to regulation, inhibited by the proton gradient disruptor carbonyl cyanide m-chlorophenylhydrazone (CCCP), but not by the sodium gradient disruptor ouabain. Hypoxanthine, xanthine, cytosine and uric acid act as competitive inhibitors. In terms of biological role, uptake of the purines adenine and guanine, and the pyrimidine uracil. Transport is probably proton-dependent. The protein is Nucleobase transporter PlUacP of Paenibacillus larvae subsp. larvae (strain NRRL B-3650 / LMG 16245).